Here is a 143-residue protein sequence, read N- to C-terminus: Large ribosomal subunit protein uL11 (143 aa).

This sequence belongs to the universal ribosomal protein uL11 family. As to quaternary structure, part of the ribosomal stalk of the 50S ribosomal subunit. Interacts with L10 and the large rRNA to form the base of the stalk. L10 forms an elongated spine to which L12 dimers bind in a sequential fashion forming a multimeric L10(L12)X complex. One or more lysine residues are methylated.

Forms part of the ribosomal stalk which helps the ribosome interact with GTP-bound translation factors. The sequence is that of Large ribosomal subunit protein uL11 from Rhizobium etli (strain ATCC 51251 / DSM 11541 / JCM 21823 / NBRC 15573 / CFN 42).